We begin with the raw amino-acid sequence, 237 residues long: Ribonuclease PH (237 aa).

Residues arginine 86 and 124–126 contribute to the phosphate site; that span reads GTR.

It belongs to the RNase PH family. Homohexameric ring arranged as a trimer of dimers.

The catalysed reaction is tRNA(n+1) + phosphate = tRNA(n) + a ribonucleoside 5'-diphosphate. Functionally, phosphorolytic 3'-5' exoribonuclease that plays an important role in tRNA 3'-end maturation. Removes nucleotide residues following the 3'-CCA terminus of tRNAs; can also add nucleotides to the ends of RNA molecules by using nucleoside diphosphates as substrates, but this may not be physiologically important. Probably plays a role in initiation of 16S rRNA degradation (leading to ribosome degradation) during starvation. The protein is Ribonuclease PH of Shewanella denitrificans (strain OS217 / ATCC BAA-1090 / DSM 15013).